The sequence spans 323 residues: L-lactate dehydrogenase (323 aa).

NAD(+)-binding positions include valine 18, aspartate 39, arginine 44, tyrosine 69, and 83–84 (GA). 2 residues coordinate substrate: glutamine 86 and arginine 92. Residues threonine 105, 122 to 124 (AAN), and serine 147 each bind NAD(+). A substrate-binding site is contributed by 124 to 127 (NPVD). Residue 152–155 (DTAR) coordinates substrate. Histidine 179 (proton acceptor) is an active-site residue. Residue tyrosine 223 is modified to Phosphotyrosine. Threonine 232 contacts substrate.

This sequence belongs to the LDH/MDH superfamily. LDH family. Homotetramer.

It localises to the cytoplasm. The enzyme catalyses (S)-lactate + NAD(+) = pyruvate + NADH + H(+). The protein operates within fermentation; pyruvate fermentation to lactate; (S)-lactate from pyruvate: step 1/1. Its function is as follows. Catalyzes the conversion of lactate to pyruvate. This chain is L-lactate dehydrogenase, found in Pediococcus acidilactici.